The chain runs to 347 residues: S-adenosylmethionine:tRNA ribosyltransferase-isomerase (347 aa).

This sequence belongs to the QueA family. As to quaternary structure, monomer.

It is found in the cytoplasm. It catalyses the reaction 7-aminomethyl-7-carbaguanosine(34) in tRNA + S-adenosyl-L-methionine = epoxyqueuosine(34) in tRNA + adenine + L-methionine + 2 H(+). It participates in tRNA modification; tRNA-queuosine biosynthesis. In terms of biological role, transfers and isomerizes the ribose moiety from AdoMet to the 7-aminomethyl group of 7-deazaguanine (preQ1-tRNA) to give epoxyqueuosine (oQ-tRNA). This Exiguobacterium sibiricum (strain DSM 17290 / CCUG 55495 / CIP 109462 / JCM 13490 / 255-15) protein is S-adenosylmethionine:tRNA ribosyltransferase-isomerase.